A 701-amino-acid chain; its full sequence is Polyribonucleotide nucleotidyltransferase (701 aa).

Residues Asp485 and Asp491 each coordinate Mg(2+). One can recognise a KH domain in the interval 552–611 (PRITTLKINPEKIRDVIGKGGATIRALTEETGTTIELEDDGTVKIASSNGEATKEAIRRI). An S1 motif domain is found at 621–689 (GTVYNGKVVR…RQGRVRLSMK (69 aa)).

The protein belongs to the polyribonucleotide nucleotidyltransferase family. Component of the RNA degradosome, which is a multiprotein complex involved in RNA processing and mRNA degradation. Mg(2+) serves as cofactor.

The protein resides in the cytoplasm. It catalyses the reaction RNA(n+1) + phosphate = RNA(n) + a ribonucleoside 5'-diphosphate. In terms of biological role, involved in mRNA degradation. Catalyzes the phosphorolysis of single-stranded polyribonucleotides processively in the 3'- to 5'-direction. The sequence is that of Polyribonucleotide nucleotidyltransferase from Shewanella piezotolerans (strain WP3 / JCM 13877).